A 238-amino-acid chain; its full sequence is Uridylate kinase (238 aa).

Residue 12-15 (KLSG) participates in ATP binding. Position 54 (Gly-54) interacts with UMP. Residues Gly-55 and Arg-59 each contribute to the ATP site. UMP contacts are provided by residues Asp-74 and 135 to 142 (TGNPFFTT). Thr-162, Asn-163, Tyr-168, and Asp-171 together coordinate ATP.

The protein belongs to the UMP kinase family. In terms of assembly, homohexamer.

Its subcellular location is the cytoplasm. The enzyme catalyses UMP + ATP = UDP + ADP. Its pathway is pyrimidine metabolism; CTP biosynthesis via de novo pathway; UDP from UMP (UMPK route): step 1/1. With respect to regulation, inhibited by UTP. Its function is as follows. Catalyzes the reversible phosphorylation of UMP to UDP. This is Uridylate kinase from Rhodopseudomonas palustris (strain BisA53).